Here is a 222-residue protein sequence, read N- to C-terminus: Germin-like protein subfamily 1 member 5 (222 aa).

The first 24 residues, 1–24 (MKGLLHFLLAKIILLALASSFVYC), serve as a signal peptide directing secretion. An intrachain disulfide couples cysteine 34 to cysteine 50. Asparagine 38 and asparagine 71 each carry an N-linked (GlcNAc...) asparagine glycan. The Cupin type-1 domain occupies 64–215 (SGLNVPGNTS…AFALDFNKVK (152 aa)). Residues histidine 112, histidine 114, and glutamate 119 each coordinate Mn(2+). Asparagine 139 is a glycosylation site (N-linked (GlcNAc...) asparagine). Residue histidine 163 coordinates Mn(2+).

It belongs to the germin family. In terms of assembly, oligomer (believed to be a pentamer but probably hexamer).

It localises to the secreted. It is found in the extracellular space. Its subcellular location is the apoplast. Its function is as follows. May play a role in plant defense. Probably has no oxalate oxidase activity even if the active site is conserved. This Arabidopsis thaliana (Mouse-ear cress) protein is Germin-like protein subfamily 1 member 5.